We begin with the raw amino-acid sequence, 469 residues long: Asparagine--tRNA ligase (469 aa).

This sequence belongs to the class-II aminoacyl-tRNA synthetase family. As to quaternary structure, homodimer.

The protein resides in the cytoplasm. It carries out the reaction tRNA(Asn) + L-asparagine + ATP = L-asparaginyl-tRNA(Asn) + AMP + diphosphate + H(+). The polypeptide is Asparagine--tRNA ligase (Porphyromonas gingivalis (strain ATCC BAA-308 / W83)).